Here is a 318-residue protein sequence, read N- to C-terminus: NADH-ubiquinone oxidoreductase chain 1 (318 aa).

8 helical membrane-spanning segments follow: residues 2-22 (FMIN…FLTL), 68-88 (ISMF…MWTP), 100-120 (LGIL…LWSG), 146-166 (LAII…PTLI), 171-191 (HIWL…STLA), 222-242 (LFFL…TILF), 253-273 (ELYT…FLWV), and 293-313 (FLPL…ITAG).

This sequence belongs to the complex I subunit 1 family. As to quaternary structure, core subunit of respiratory chain NADH dehydrogenase (Complex I) which is composed of 45 different subunits.

The protein localises to the mitochondrion inner membrane. The enzyme catalyses a ubiquinone + NADH + 5 H(+)(in) = a ubiquinol + NAD(+) + 4 H(+)(out). Its function is as follows. Core subunit of the mitochondrial membrane respiratory chain NADH dehydrogenase (Complex I) which catalyzes electron transfer from NADH through the respiratory chain, using ubiquinone as an electron acceptor. Essential for the catalytic activity and assembly of complex I. This Hipposideros armiger terasensis (Formosan leaf-nosed bat) protein is NADH-ubiquinone oxidoreductase chain 1 (MT-ND1).